A 184-amino-acid chain; its full sequence is Protein DESIGUAL 3 (184 aa).

An N-terminal signal peptide occupies residues methionine 1–glycine 24. Positions alanine 34–histidine 45 are enriched in basic residues. Residues alanine 34–serine 53 form a disordered region. 3 helical membrane-spanning segments follow: residues glycine 62 to cysteine 82, isoleucine 99 to leucine 119, and phenylalanine 140 to valine 160. Asparagine 180 carries an N-linked (GlcNAc...) asparagine glycan.

This sequence belongs to the DESIGUAL family. Mainly expressed in roots, inflorescences and developing leaves, and, at low levels, in mature leaves.

The protein resides in the endoplasmic reticulum membrane. Its function is as follows. Involved, partially redundantly with VCC/DEAL1 and DEAL2, to ensure bilateral symmetry development and early leaf margin patterning, probably via the regulation of auxin and CUC2 distribution. The protein is Protein DESIGUAL 3 of Arabidopsis thaliana (Mouse-ear cress).